A 130-amino-acid polypeptide reads, in one-letter code: Large ribosomal subunit protein eL32 (130 aa).

The protein belongs to the eukaryotic ribosomal protein eL32 family. Part of the 50S ribosomal subunit.

The chain is Large ribosomal subunit protein eL32 from Pyrococcus furiosus (strain ATCC 43587 / DSM 3638 / JCM 8422 / Vc1).